The primary structure comprises 776 residues: Probable inorganic carbon transporter subunit DabA (776 aa).

Cys-313, Asp-315, His-473, and Cys-488 together coordinate Zn(2+).

Belongs to the inorganic carbon transporter (TC 9.A.2) DabA family. As to quaternary structure, forms a complex with DabB. Zn(2+) serves as cofactor.

Its subcellular location is the cell inner membrane. Its function is as follows. Part of an energy-coupled inorganic carbon pump. The polypeptide is Probable inorganic carbon transporter subunit DabA (Chromobacterium violaceum (strain ATCC 12472 / DSM 30191 / JCM 1249 / CCUG 213 / NBRC 12614 / NCIMB 9131 / NCTC 9757 / MK)).